Reading from the N-terminus, the 325-residue chain is MATANGAKSPSSMGPKVLFYSILLTLQYGAQPLISKRCIRKDVIVTSSVLTCEIVKVICALILMARNGSLKGLAKEWTLMGSLTASGLPAAIYALQNSLLQISYRSLDSLTFSILNQTKIFFTAFFTFIILRQKQSILQIGALCLLIMAAVLLSVGEGSNKDSSGINADQKLFYGIIPVLAASVLSGLASSLCQWASQVKKHSSYLMTVEMSIVGSLCLLVSTLKSPDGEAIKKYGFFHGWTALTLVPVISNALGGILVGLVTSHAGGVRKGFVIVSALLVTALLQFAFEGKPPSSYCLVALPLVMSSISMYQKYPYIDKKKKKV.

The Cytoplasmic segment spans residues 1 to 13; it reads MATANGAKSPSSM. The helical transmembrane segment at 14-34 threads the bilayer; it reads GPKVLFYSILLTLQYGAQPLI. Residues 35–42 lie on the Lumenal side of the membrane; the sequence is SKRCIRKD. The helical transmembrane segment at 43 to 63 threads the bilayer; the sequence is VIVTSSVLTCEIVKVICALIL. Residues 64–109 are Cytoplasmic-facing; sequence MARNGSLKGLAKEWTLMGSLTASGLPAAIYALQNSLLQISYRSLDS. A helical transmembrane segment spans residues 110 to 130; it reads LTFSILNQTKIFFTAFFTFII. At 131–135 the chain is on the lumenal side; it reads LRQKQ. The helical transmembrane segment at 136–156 threads the bilayer; sequence SILQIGALCLLIMAAVLLSVG. Topologically, residues 157–171 are cytoplasmic; sequence EGSNKDSSGINADQK. Residues 172-192 traverse the membrane as a helical segment; that stretch reads LFYGIIPVLAASVLSGLASSL. Topologically, residues 193–203 are lumenal; it reads CQWASQVKKHS. A helical membrane pass occupies residues 204-224; sequence SYLMTVEMSIVGSLCLLVSTL. At 225–241 the chain is on the cytoplasmic side; it reads KSPDGEAIKKYGFFHGW. The chain crosses the membrane as a helical span at residues 242–262; it reads TALTLVPVISNALGGILVGLV. At 263–270 the chain is on the lumenal side; that stretch reads TSHAGGVR. Residues 271–291 form a helical membrane-spanning segment; sequence KGFVIVSALLVTALLQFAFEG. Over 292–325 the chain is Cytoplasmic; the sequence is KPPSSYCLVALPLVMSSISMYQKYPYIDKKKKKV.

The protein belongs to the nucleotide-sugar transporter family. CMP-Sialate:CMP antiporter (TC 2.A.7.12) subfamily. As to expression, expressed in roots, cotyledons, leaves, stems, flowers and siliques.

The protein localises to the endoplasmic reticulum membrane. In terms of biological role, mediates the transport of UDP-linked acetylated hexosamines across the endoplasmic reticulum (ER) membrane. Facilitates UDP-N-acetylglucosamine (UDP-GlcNAc) and UDP-N-acetylgalactosamine (UDP-GalNAc) transport. Regulates the cytokinin signal in meristematic cells through modulating activity of cytokinin oxidases/dehydrogenases. Part of the ER quality control system, which determines the fate of aberrant proteins in the secretory pathway. This is UDP-N-acetylglucosamine transporter ROCK1 from Arabidopsis thaliana (Mouse-ear cress).